A 435-amino-acid chain; its full sequence is Large ribosomal subunit protein mL65 (435 aa).

Belongs to the mitochondrion-specific ribosomal protein mL65 family. As to quaternary structure, component of the mitochondrial ribosome small subunit (28S) which comprises a 12S rRNA and about 30 distinct proteins.

Its subcellular location is the mitochondrion. In Bos taurus (Bovine), this protein is Large ribosomal subunit protein mL65 (MRPS30).